We begin with the raw amino-acid sequence, 502 residues long: Cytochrome P450 monooxygenase orf6 (502 aa).

A helical transmembrane segment spans residues 3–25; it reads ALWVLAVALVAYFLCLSIYRLFL. N-linked (GlcNAc...) asparagine glycosylation is present at asparagine 382. Residue cysteine 445 coordinates heme.

The protein belongs to the cytochrome P450 family. It depends on heme as a cofactor.

The protein localises to the membrane. Its pathway is mycotoxin biosynthesis. Its function is as follows. Cytochrome P450 monooxygenase; part of the gene cluster that mediates the biosynthesis of brefeldin A (BFA), a protein transport inhibitor that shows antiviral, antifungal, and antitumor properties. The proposed biosynthesis of BFA involves formation of an acyclic polyketide chain that is differentially tailored throughout the backbone. The highly reducing polyketide synthase Bref-PKS is proposed to synthesize the precisely reduced octaketide precursor, which could then be directly offloaded by the thiohydrolase enzyme Bref-TH followed by a cytochrome P450 monooxygenase-mediated formation of the cyclopentane ring and macrocyclization to afford 7-deoxy BFA. Alternatively, the first ring annulation can also occur on the ACP-tethered intermediate before the thiohydrolase release and lactonization. The C7-hydroxylation by another cytochrome P450 monooxygenase is believed to be the final step in the process to obtain the final structure of BFA. In addition to the HRPKS Bref-PKS and the thiohydrolase Bref-TH, the brefeldin A biosynthesis cluster contains 4 cytochrome p450 monooxygenases (called orf3 to orf6), as well a the probable cluster-specific transcription regulator orf8. The sequence is that of Cytochrome P450 monooxygenase orf6 from Eupenicillium brefeldianum (Penicillium brefeldianum).